We begin with the raw amino-acid sequence, 466 residues long: tRNA modification GTPase MnmE (466 aa).

Positions 24, 85, and 128 each coordinate (6S)-5-formyl-5,6,7,8-tetrahydrofolate. Positions 224–384 (GLNIVLAGQP…LRTELLHLVG (161 aa)) constitute a TrmE-type G domain. Asparagine 234 contacts K(+). GTP is bound by residues 234–239 (NVGKSS), 253–259 (TPIAGTT), and 278–281 (DTAG). Serine 238 contacts Mg(2+). Residues threonine 253, isoleucine 255, and threonine 258 each coordinate K(+). A Mg(2+)-binding site is contributed by threonine 259. (6S)-5-formyl-5,6,7,8-tetrahydrofolate is bound at residue lysine 466.

The protein belongs to the TRAFAC class TrmE-Era-EngA-EngB-Septin-like GTPase superfamily. TrmE GTPase family. Homodimer. Heterotetramer of two MnmE and two MnmG subunits. K(+) is required as a cofactor.

The protein localises to the cytoplasm. Its function is as follows. Exhibits a very high intrinsic GTPase hydrolysis rate. Involved in the addition of a carboxymethylaminomethyl (cmnm) group at the wobble position (U34) of certain tRNAs, forming tRNA-cmnm(5)s(2)U34. This Herminiimonas arsenicoxydans protein is tRNA modification GTPase MnmE.